Here is a 319-residue protein sequence, read N- to C-terminus: Plasmodesmata-located protein 4 (319 aa).

Residues 1–26 form the signal peptide; it reads MVVHLISLLTQTLALIILSLPSIINT. At 27–288 the chain is on the extracellular side; the sequence is SQLDYDTLVF…EGSKVNTGKS (262 aa). Disulfide bonds link C39-C127, C103-C112, C115-C140, C177-C247, C223-C232, and C235-C260. Gnk2-homologous domains are found at residues 45-149 and 170-269; these read NILQ…FERI and HGLI…YHPH. Residues 289-309 form a helical membrane-spanning segment; that stretch reads LAIVVGGVAALVFVAIFFMFL. A necessary and sufficient for plasmodesmal targeting region spans residues 289 to 309; the sequence is LAIVVGGVAALVFVAIFFMFL. Topologically, residues 310–319 are cytoplasmic; sequence KSLRKKGDDC.

Belongs to the cysteine-rich repeat secretory protein family. Plasmodesmata-located proteins (PDLD) subfamily. In terms of assembly, (Microbial infection) Interacts with Grapevine fanleaf virus (GFLV) 2B-MP. Highly expressed in seeds and roots.

The protein localises to the cell membrane. The protein resides in the cell junction. It localises to the plasmodesma. In terms of biological role, modulates cell-to-cell trafficking. The chain is Plasmodesmata-located protein 4 from Arabidopsis thaliana (Mouse-ear cress).